The chain runs to 961 residues: Lon protease homolog, mitochondrial (961 aa).

The transit peptide at 1-67 (MAGGTGCVRL…SPAAAGHWRG (67 aa)) directs the protein to the mitochondrion. Disordered regions lie at residues 76–103 (GGGA…GSAG) and 220–262 (QLEV…VVVG). One can recognise a Lon N-terminal domain in the interval 125 to 371 (LPLIAVTRNP…KALSLLKKEF (247 aa)). The span at 235–244 (KLRKKPKRGK) shows a compositional bias: basic residues. Positions 245–257 (KEAEEDGATKRPL) are enriched in basic and acidic residues. 524-531 (GPPGVGKT) is an ATP binding site. The Lon proteolytic domain maps to 760 to 951 (VTPPGVVMGL…REIFDIAFPE (192 aa)). The span at 784–801 (SLRRPRDRDSDKGDKDGS) shows a compositional bias: basic and acidic residues. The segment at 784 to 803 (SLRRPRDRDSDKGDKDGSLE) is disordered. Residues serine 857 and lysine 900 contribute to the active site.

Belongs to the peptidase S16 family. Homohexamer. Organized in a ring with a central cavity. The ATP-binding and proteolytic domains (AP-domain) form a hexameric chamber, while the N-terminal domain is arranged as a trimer of dimers. DNA and RNA binding is stimulated by substrate and inhibited by ATP binding. Interacts with TWNK and mitochondrial DNA polymerase subunit POLG.

The protein localises to the mitochondrion matrix. The catalysed reaction is Hydrolysis of proteins in presence of ATP.. In terms of biological role, ATP-dependent serine protease that mediates the selective degradation of misfolded, unassembled or oxidatively damaged polypeptides as well as certain short-lived regulatory proteins in the mitochondrial matrix. Endogenous substrates include mitochondrial steroidogenic acute regulatory (StAR) protein, DELE1, helicase Twinkle (TWNK) and the large ribosomal subunit protein MRPL32/bL32m. MRPL32/bL32m is protected from degradation by LONP1 when it is bound to a nucleic acid (RNA), but TWNK is not. May also have a chaperone function in the assembly of inner membrane protein complexes. Participates in the regulation of mitochondrial gene expression and in the maintenance of the integrity of the mitochondrial genome. Binds to mitochondrial promoters and RNA in a single-stranded, site-specific, and strand-specific manner. May regulate mitochondrial DNA replication and/or gene expression using site-specific, single-stranded DNA binding to target the degradation of regulatory proteins binding to adjacent sites in mitochondrial promoters. The protein is Lon protease homolog, mitochondrial of Bos taurus (Bovine).